A 136-amino-acid polypeptide reads, in one-letter code: Crossover junction endodeoxyribonuclease Hjc (136 aa).

Residue glutamate 9 coordinates Mg(2+). Serine 29 is a catalytic residue. The Mg(2+) site is built by aspartate 38 and glutamate 51.

This sequence belongs to the Holliday junction resolvase Hjc family. As to quaternary structure, homodimer. Mg(2+) is required as a cofactor.

It catalyses the reaction Endonucleolytic cleavage at a junction such as a reciprocal single-stranded crossover between two homologous DNA duplexes (Holliday junction).. A structure-specific endonuclease that resolves Holliday junction (HJ) intermediates during genetic recombination. Cleaves 4-way DNA junctions introducing paired nicks in opposing strands, leaving a 5'-terminal phosphate and a 3'-terminal hydroxyl group that are subsequently ligated to produce recombinant products. The polypeptide is Crossover junction endodeoxyribonuclease Hjc (Archaeoglobus fulgidus (strain ATCC 49558 / DSM 4304 / JCM 9628 / NBRC 100126 / VC-16)).